The chain runs to 334 residues: MIKIAVAGGVTGGHLYPALAVLKELEKLTPIDVLYFTVSGKLEERVLKDYNYKKVSLKIQGLKRPVYSIENIKRLFKIFNANNIVLKELKKFKPDIVFVTGGYVSYPVGTAAKKLKIPLYIQEQNVIPGLANIKLSSFAKKVFVSFEESKKYFQRDVVVAGNPILICHKENLNFEKKTILIVGGSGGSEFLNSLACKLSNKLKDYHFILSSGRKEVPCKSENLTILDYIENMSDYYSAVSCAITRGGATTVSELIFFDTPSIIIPWEGSTEAHQIENAKQIEKLGLGYVIREKEVNIDEIANKIIELSNRERKGSPKTNPAILIAKEIKNEVLK.

UDP-N-acetyl-alpha-D-glucosamine contacts are provided by residues 11-13 (TGG), N125, S185, I229, and Q274.

The protein belongs to the glycosyltransferase 28 family. MurG subfamily.

The protein localises to the cell inner membrane. It carries out the reaction di-trans,octa-cis-undecaprenyl diphospho-N-acetyl-alpha-D-muramoyl-L-alanyl-D-glutamyl-meso-2,6-diaminopimeloyl-D-alanyl-D-alanine + UDP-N-acetyl-alpha-D-glucosamine = di-trans,octa-cis-undecaprenyl diphospho-[N-acetyl-alpha-D-glucosaminyl-(1-&gt;4)]-N-acetyl-alpha-D-muramoyl-L-alanyl-D-glutamyl-meso-2,6-diaminopimeloyl-D-alanyl-D-alanine + UDP + H(+). The protein operates within cell wall biogenesis; peptidoglycan biosynthesis. Functionally, cell wall formation. Catalyzes the transfer of a GlcNAc subunit on undecaprenyl-pyrophosphoryl-MurNAc-pentapeptide (lipid intermediate I) to form undecaprenyl-pyrophosphoryl-MurNAc-(pentapeptide)GlcNAc (lipid intermediate II). This chain is UDP-N-acetylglucosamine--N-acetylmuramyl-(pentapeptide) pyrophosphoryl-undecaprenol N-acetylglucosamine transferase, found in Thermosipho africanus (strain TCF52B).